Here is a 1485-residue protein sequence, read N- to C-terminus: Cystic fibrosis transmembrane conductance regulator (1485 aa).

At 1 to 78 (MQKTPLEKAS…KLINALKRCF (78 aa)) the chain is on the cytoplasmic side. A helical transmembrane segment spans residues 79-99 (FWKFLFYGILLYLGEVTKAVQ). One can recognise an ABC transmembrane type-1 1 domain in the interval 82-366 (FLFYGILLYL…WAVQTWYDSL (285 aa)). The Extracellular segment spans residues 100 to 123 (PLLLGRIIASYDRDNEHERSIAYY). Residues 124–147 (LAIGLCLLFVVRMLLLHPAIFGLH) form a helical membrane-spanning segment. Topologically, residues 148–196 (HIGMQMRIAMFSLIYKKTLKLSSKVLDKISTGQLVSLLSNNLNKFDEGL) are cytoplasmic. Residues 197–217 (ALAHFVWIAPLQVLLLMGLLW) traverse the membrane as a helical segment. Over 218-223 (DLLQAS) the chain is Extracellular. Residues 224 to 244 (AFCGLGFLIILSLFQARLGRM) form a helical membrane-spanning segment. Residues 245–299 (MMKYKDKRAGKINERLVITSQIIENIQSVKAYCWENAMEKIIETIRETELKLTRK) are Cytoplasmic-facing. A helical transmembrane segment spans residues 300–320 (AAYVRYFNSSAFFFSGFFVVF). Residues 321 to 340 (LSIVPHLLLDGISLRKIFTT) are Extracellular-facing. The helical transmembrane segment at 341-359 (ISFSIVLRMAVTRQFPWAV) threads the bilayer. At 360–860 (QTWYDSLGVI…YLRFLTAHKN (501 aa)) the chain is on the cytoplasmic side. Residues Trp402, Ser435, 459 to 466 (GSTGAGKT), and Gln494 contribute to the ATP site. The ABC transporter 1 domain occupies 422–647 (ISNEDPSAFF…RPEFSSHLIG (226 aa)). The tract at residues 652 to 833 (NAERRNSIIT…EEINEEDLKE (182 aa)) is disordered R region. The span at 750 to 760 (PRSNFLNTGPT) shows a compositional bias: polar residues. The helical transmembrane segment at 861-881 (FIFILVFCLVIFFVEVAASSA) threads the bilayer. Positions 880–1163 (SAWLWIIKRN…ASIDVDSLMR (284 aa)) constitute an ABC transmembrane type-1 2 domain. At 882 to 923 (WLWIIKRNAPAINMTSNENVSEVSDTLSVIVTHTSFYYVFYI) the chain is on the extracellular side. N-linked (GlcNAc...) asparagine glycosylation is found at Asn894 and Asn900. The discontinuously helical transmembrane segment at 924-944 (YVGVADSLLALGIFRGLPLVH) threads the bilayer. Residues 945–995 (SLISVSKVLHKKMLHAILHAPMSTFNTMRAGRILNRFSKDTAILDDILPLS) are Cytoplasmic-facing. Residues 996 to 1016 (IFDLTQLVLIVIGAITVVSLL) form a helical membrane-spanning segment. At 1017–1018 (EP) the chain is on the extracellular side. A helical transmembrane segment spans residues 1019–1039 (YIFLATVPVIVAFILLRSYFL). At 1040–1100 (HTSQQLKQLE…TANWFLYLST (61 aa)) the chain is on the cytoplasmic side. A helical transmembrane segment spans residues 1101–1121 (LRWFQMTIEMIFVIFFIAVSF). The Extracellular portion of the chain corresponds to 1122-1135 (ISIATSGAGEEKVG). The chain crosses the membrane as a helical span at residues 1136 to 1156 (IVLTLAMNIMNTLQWAVNASI). At 1157–1485 (DVDSLMRSVS…TEEEVQDTRL (329 aa)) the chain is on the cytoplasmic side. Residues 1213-1446 (MTVKNLSANY…KSFFKQAISH (234 aa)) enclose the ABC transporter 2 domain. Residues Tyr1222 and 1247-1254 (GRTGSGKS) contribute to the ATP site. Residues 1458–1485 (RNSSKRKSRPQISALQEETEEEVQDTRL) are disordered. Residues 1474 to 1485 (EETEEEVQDTRL) show a composition bias toward acidic residues. A PDZ-binding motif is present at residues 1483 to 1485 (TRL).

It belongs to the ABC transporter superfamily. ABCC family. CFTR transporter (TC 3.A.1.202) subfamily. As to quaternary structure, monomer; does not require oligomerization for channel activity. May form oligomers in the membrane. Post-translationally, phosphorylated; cAMP treatment promotes phosphorylation and activates the channel. Dephosphorylation decreases the ATPase activity (in vitro). Phosphorylation at PKA sites activates the channel. Phosphorylation at PKC sites enhances the response to phosphorylation by PKA.

Its subcellular location is the apical cell membrane. It localises to the early endosome membrane. The protein localises to the cell membrane. The protein resides in the recycling endosome membrane. It is found in the endoplasmic reticulum membrane. The catalysed reaction is ATP + H2O + closed Cl(-) channel = ADP + phosphate + open Cl(-) channel.. It carries out the reaction chloride(in) = chloride(out). It catalyses the reaction hydrogencarbonate(in) = hydrogencarbonate(out). The enzyme catalyses ATP + H2O = ADP + phosphate + H(+). Epithelial ion channel that plays an important role in the regulation of epithelial ion and water transport and fluid homeostasis. Mediates the transport of chloride ions across the cell membrane. Possesses an intrinsic ATPase activity and utilizes ATP to gate its channel; the passive flow of anions through the channel is gated by cycles of ATP binding and hydrolysis by the ATP-binding domains. The ion channel is also permeable to HCO(3)(-); selectivity depends on the extracellular chloride concentration. Exerts its function also by modulating the activity of other ion channels and transporters. Contributes to the regulation of the pH and the ion content of the epithelial fluid layer. In Xenopus laevis (African clawed frog), this protein is Cystic fibrosis transmembrane conductance regulator.